Here is a 338-residue protein sequence, read N- to C-terminus: Heat-inducible transcription repressor HrcA (338 aa).

Belongs to the HrcA family.

Its function is as follows. Negative regulator of class I heat shock genes (grpE-dnaK-dnaJ and groELS operons). Prevents heat-shock induction of these operons. This Streptomyces albus G protein is Heat-inducible transcription repressor HrcA.